Consider the following 274-residue polypeptide: NH(3)-dependent NAD(+) synthetase (274 aa).

46-53 provides a ligand contact to ATP; it reads GISGGQDS. Asp-52 provides a ligand contact to Mg(2+). Deamido-NAD(+) is bound at residue Arg-140. Thr-160 is a binding site for ATP. Residue Glu-165 coordinates Mg(2+). The deamido-NAD(+) site is built by Lys-173 and Asp-180. The ATP site is built by Lys-189 and Thr-211. 260–261 is a deamido-NAD(+) binding site; sequence HK.

The protein belongs to the NAD synthetase family. As to quaternary structure, homodimer.

The catalysed reaction is deamido-NAD(+) + NH4(+) + ATP = AMP + diphosphate + NAD(+) + H(+). It functions in the pathway cofactor biosynthesis; NAD(+) biosynthesis; NAD(+) from deamido-NAD(+) (ammonia route): step 1/1. Functionally, catalyzes the ATP-dependent amidation of deamido-NAD to form NAD. Uses ammonia as a nitrogen source. The protein is NH(3)-dependent NAD(+) synthetase of Streptococcus equi subsp. equi (strain 4047).